A 68-amino-acid chain; its full sequence is Defensin gallicin (68 aa).

Positions 1–16 (MWIESDAGVAIDRHAR) are cleaved as a signal peptide.

Contains 5 disulfide bonds. Expressed in hemolymph, gills, digestive gland, foot, adductor muscles and mantle.

It is found in the secreted. The protein localises to the target cell membrane. In terms of biological role, shows antibacterial activity against numerous Gram-positive bacteria. It selectively inhibits peptidoglycan biosynthesis through complex formation with the cell wall precursor lipid II (1:1 molar ratio) thus inhibiting cell wall synthesis. The sequence is that of Defensin gallicin from Mytilus galloprovincialis (Mediterranean mussel).